Here is a 309-residue protein sequence, read N- to C-terminus: Malate dehydrogenase (309 aa).

Residues 8-13 and Asp-33 contribute to the NAD(+) site; that span reads GAGLVG. Positions 82 and 88 each coordinate substrate. NAD(+) is bound by residues Asn-95 and 118–120; that span reads VSN. Residues Asn-120 and Arg-151 each coordinate substrate. The Proton acceptor role is filled by His-175.

Belongs to the LDH/MDH superfamily. MDH type 3 family.

The enzyme catalyses (S)-malate + NAD(+) = oxaloacetate + NADH + H(+). Functionally, catalyzes the reversible oxidation of malate to oxaloacetate. In Pseudomonas putida (strain ATCC 700007 / DSM 6899 / JCM 31910 / BCRC 17059 / LMG 24140 / F1), this protein is Malate dehydrogenase.